Here is a 561-residue protein sequence, read N- to C-terminus: Putative transport protein YbjL (561 aa).

The next 5 helical transmembrane spans lie at 8-28 (LLNG…LCLG), 32-52 (LGSI…LLGQ), 66-86 (FMLF…SIFF), 94-114 (MLAL…GKLF), and 158-178 (NLSL…IVGA). 2 consecutive RCK C-terminal domains span residues 200–288 (RGLD…SFRN) and 292–373 (VFDR…RIGF). 5 helical membrane passes run 383–403 (LLAF…TFQF), 406–426 (FSFG…LGFM), 451–471 (VFMA…LGAI), 475–495 (MLIA…LFGA), and 540–560 (AIAN…WPGL).

Belongs to the AAE transporter (TC 2.A.81) family. YbjL subfamily.

The protein resides in the cell membrane. This chain is Putative transport protein YbjL, found in Escherichia coli O127:H6 (strain E2348/69 / EPEC).